The following is a 138-amino-acid chain: ATP synthase epsilon chain (138 aa).

This sequence belongs to the ATPase epsilon chain family. In terms of assembly, F-type ATPases have 2 components, CF(1) - the catalytic core - and CF(0) - the membrane proton channel. CF(1) has five subunits: alpha(3), beta(3), gamma(1), delta(1), epsilon(1). CF(0) has three main subunits: a, b and c.

It localises to the cell membrane. Its function is as follows. Produces ATP from ADP in the presence of a proton gradient across the membrane. The polypeptide is ATP synthase epsilon chain (Streptococcus pyogenes serotype M2 (strain MGAS10270)).